We begin with the raw amino-acid sequence, 142 residues long: FAD synthase (142 aa).

Residues 9–10 (VF), 14–17 (HLGH), Asp-93, and Tyr-120 contribute to the ATP site.

The protein belongs to the archaeal FAD synthase family. Homodimer. It depends on a divalent metal cation as a cofactor.

It catalyses the reaction FMN + ATP + H(+) = FAD + diphosphate. Its pathway is cofactor biosynthesis; FAD biosynthesis; FAD from FMN: step 1/1. Its function is as follows. Catalyzes the transfer of the AMP portion of ATP to flavin mononucleotide (FMN) to produce flavin adenine dinucleotide (FAD) coenzyme. The chain is FAD synthase (ribL) from Thermoplasma volcanium (strain ATCC 51530 / DSM 4299 / JCM 9571 / NBRC 15438 / GSS1).